The chain runs to 357 residues: Vomeronasal type-1 receptor 5 (357 aa).

The Extracellular portion of the chain corresponds to 1–3; sequence MLK. A helical membrane pass occupies residues 4–24; that stretch reads LVIIENMAEIMLFSLDLLLFS. Over 25-52 the chain is Cytoplasmic; the sequence is TDILCFNFPSKMIKLPGFITIQIFFYPQ. The chain crosses the membrane as a helical span at residues 53-73; that stretch reads ASFGISANTILFLFHIFTFVF. Over 74–81 the chain is Extracellular; the sequence is SHRSKSID. The chain crosses the membrane as a helical span at residues 82 to 102; sequence MIISHLSLIHILLLFTQAILV. Residues 103-130 lie on the Cytoplasmic side of the membrane; it reads SLDFFGSQNTQDDLRCKVIVFLNKVMRG. The chain crosses the membrane as a helical span at residues 131-151; sequence LSICTPCLLNVLQAIISPSIF. Topologically, residues 152 to 163 are extracellular; the sequence is SLAKLKHPSASH. Residues 164–184 traverse the membrane as a helical segment; that stretch reads ILGFFLFSWVLNMFIGVIFCC. The Cytoplasmic portion of the chain corresponds to 185-269; that stretch reads TLWLPPVKWG…PVSPVKRASQ (85 aa). The helical transmembrane segment at 270–290 threads the bilayer; it reads TILLLVSFVFIYWVDFMFSFS. The Extracellular portion of the chain corresponds to 291 to 300; the sequence is RGVTWINDSL. The N-linked (GlcNAc...) asparagine glycan is linked to asparagine 297. A helical transmembrane segment spans residues 301–321; it reads LVWFQVIVANSYATISPLMLI. The Cytoplasmic segment spans residues 322-357; that stretch reads YADNQIFKTLQMLWFKYLSPPKLMLKFNRQCGSTKK.

Belongs to the G-protein coupled receptor 1 family.

The protein resides in the cell membrane. Its function is as follows. Putative pheromone receptor. The sequence is that of Vomeronasal type-1 receptor 5 (VN1R5) from Gorilla gorilla gorilla (Western lowland gorilla).